A 498-amino-acid polypeptide reads, in one-letter code: POTE ankyrin domain family member A (498 aa).

5 ANK repeats span residues 98–127, 131–160, 164–193, 197–226, and 230–259; these read KKRTALHLACANGNSEVVSLLLDRQCQLHV, KKRTALIKAVQCQEDECALMLLQHGTDPNL, YGNTALHYAVYNEDKLMAKTLLLYGADIES, GGLTPLLLAVHGQKQRMVKFLIKKKANLNA, and FGRTALILAVRCGSASIVSLLLQQNIDVFS. A disordered region spans residues 289 to 410; the sequence is NQMPNNSSGN…SNEKNKVKSQ (122 aa). Residues 290–302 show a composition bias toward polar residues; the sequence is QMPNNSSGNSNPE. Over residues 303–338 the composition is skewed to basic and acidic residues; the sequence is QDLKLTSEEEPQRLKGSENSQHEKVTQEPDINKDCD. Polar residues predominate over residues 348-359; the sequence is HGSNNVGLSENL. Basic and acidic residues predominate over residues 392–406; it reads EEYHRPEKKSNEKNK. Residues 469–497 are a coiled coil; sequence EHLLELKNSHYEQLTVEVEQMENMVHVLQ.

The protein belongs to the POTE family.

The polypeptide is POTE ankyrin domain family member A (POTEA) (Homo sapiens (Human)).